The chain runs to 473 residues: Ribulose bisphosphate carboxylase large chain 2 (473 aa).

Substrate is bound by residues Asn-116 and Thr-166. The active-site Proton acceptor is Lys-168. Lys-170 lines the substrate pocket. Positions 194, 196, and 197 each coordinate Mg(2+). Lys-194 is modified (N6-carboxylysine). The active-site Proton acceptor is His-287. 3 residues coordinate substrate: Arg-288, His-320, and Ser-372.

This sequence belongs to the RuBisCO large chain family. Type I subfamily. Heterohexadecamer of 8 large chains and 8 small chains. Mg(2+) is required as a cofactor.

The enzyme catalyses 2 (2R)-3-phosphoglycerate + 2 H(+) = D-ribulose 1,5-bisphosphate + CO2 + H2O. The catalysed reaction is D-ribulose 1,5-bisphosphate + O2 = 2-phosphoglycolate + (2R)-3-phosphoglycerate + 2 H(+). Functionally, ruBisCO catalyzes two reactions: the carboxylation of D-ribulose 1,5-bisphosphate, the primary event in carbon dioxide fixation, as well as the oxidative fragmentation of the pentose substrate. Both reactions occur simultaneously and in competition at the same active site. This is Ribulose bisphosphate carboxylase large chain 2 from Acidithiobacillus ferrooxidans (strain ATCC 23270 / DSM 14882 / CIP 104768 / NCIMB 8455) (Ferrobacillus ferrooxidans (strain ATCC 23270)).